Consider the following 126-residue polypeptide: UPF0102 protein plu4003 (126 aa).

The protein belongs to the UPF0102 family.

This is UPF0102 protein plu4003 from Photorhabdus laumondii subsp. laumondii (strain DSM 15139 / CIP 105565 / TT01) (Photorhabdus luminescens subsp. laumondii).